Reading from the N-terminus, the 157-residue chain is Thioredoxin 2 (157 aa).

An N-terminal signal peptide occupies residues M1–C22. Positions L46–L157 constitute a Thioredoxin domain. Residues C82 and C85 each act as nucleophile in the active site. A disulfide bond links C82 and C85.

It belongs to the thioredoxin family. In terms of assembly, monomer. Component of the translocon PTEX complex composed of HSP101, EXP2, PTEX150, PTEX88 and TRX2. In terms of processing, the disulfide bond between Cys-82 and Cys-85 acts as a redox-active center and is reduced by thioredoxin reductase TRXR.

Its function is as follows. Participates in various redox reactions through the reversible oxidation of its active center dithiol to a disulfide and catalyzes dithiol-disulfide exchange reactions. As part of the translocon PTEX complex, plays a role in the export of parasite proteins into the host erythrocyte. The translocon PTEX complex is a multi-protein machinery resident in the parasite parasitophorous vacuolar membrane, responsible for protein secretion into host cells. May contribute to the unfolding of proteins containing the PEXEL localization motif before their passage through the translocon or regulate the PTEX complex function. The protein is Thioredoxin 2 of Plasmodium berghei (strain Anka).